Here is a 203-residue protein sequence, read N- to C-terminus: Glycerol-3-phosphate acyltransferase (203 aa).

5 consecutive transmembrane segments (helical) span residues 2 to 22 (LATL…AILV), 54 to 74 (CLVL…AYFL), 80 to 100 (ALGL…FFGF), 114 to 134 (LPIG…MVAI), and 153 to 173 (TWLI…LIIF).

It belongs to the PlsY family. As to quaternary structure, probably interacts with PlsX.

It localises to the cell inner membrane. It catalyses the reaction an acyl phosphate + sn-glycerol 3-phosphate = a 1-acyl-sn-glycero-3-phosphate + phosphate. The protein operates within lipid metabolism; phospholipid metabolism. In terms of biological role, catalyzes the transfer of an acyl group from acyl-phosphate (acyl-PO(4)) to glycerol-3-phosphate (G3P) to form lysophosphatidic acid (LPA). This enzyme utilizes acyl-phosphate as fatty acyl donor, but not acyl-CoA or acyl-ACP. This chain is Glycerol-3-phosphate acyltransferase, found in Pseudoalteromonas translucida (strain TAC 125).